The chain runs to 161 residues: Extracellular giant hemoglobin major globin subunit B1 (161 aa).

An N-terminal signal peptide occupies residues 1-16 (MTILVLFLSCAALASA). Residues 18–161 (CCSRGDAEVV…YIAAGIGAGL (144 aa)) form the Globin domain. A disulfide bridge connects residues C19 and C149. A heme b-binding site is contributed by H112.

The protein belongs to the globin family. As to quaternary structure, the 400 kDa hemoglobin consists of a spherical 24-mer arranged as a double layer of dome-shaped dodecamers. Each dodecamer is composed of the 3-fold trimer of the tetramer A1-A2-B1-B2 having one intra-tetramer (A1-B2) disulfide bond and one inter-tetramer (B1-B2) disulfide bond per tetramer.

It localises to the secreted. Functionally, the extracellular giant hemoglobin is able to bind and transport oxygen and sulfide simultaneously and reversibly at two different sites. The chain is Extracellular giant hemoglobin major globin subunit B1 (ghbB1) from Oligobrachia mashikoi (Beard worm).